Here is an 88-residue protein sequence, read N- to C-terminus: Putative regulatory protein PCC7424_3427 (88 aa).

Belongs to the RemA family.

The sequence is that of Putative regulatory protein PCC7424_3427 from Gloeothece citriformis (strain PCC 7424) (Cyanothece sp. (strain PCC 7424)).